Reading from the N-terminus, the 609-residue chain is UvrABC system protein C (609 aa).

One can recognise a GIY-YIG domain in the interval 15-92; that stretch reads TGSGVYQIQD…IKQFRPRYNV (78 aa). One can recognise a UVR domain in the interval 202–237; the sequence is DQVIIKLTERMEVASENLVFEEAAHYRDQIRQLRRL.

It belongs to the UvrC family. As to quaternary structure, interacts with UvrB in an incision complex.

The protein localises to the cytoplasm. Its function is as follows. The UvrABC repair system catalyzes the recognition and processing of DNA lesions. UvrC both incises the 5' and 3' sides of the lesion. The N-terminal half is responsible for the 3' incision and the C-terminal half is responsible for the 5' incision. This is UvrABC system protein C from Coxiella burnetii (strain Dugway 5J108-111).